Here is a 97-residue protein sequence, read N- to C-terminus: Citrate lyase acyl carrier protein (97 aa).

Ser-14 carries the post-translational modification O-(phosphoribosyl dephospho-coenzyme A)serine.

The protein belongs to the CitD family. As to quaternary structure, oligomer with a subunit composition of (alpha,beta,gamma)6.

It localises to the cytoplasm. In terms of biological role, covalent carrier of the coenzyme of citrate lyase. The sequence is that of Citrate lyase acyl carrier protein from Yersinia enterocolitica serotype O:8 / biotype 1B (strain NCTC 13174 / 8081).